Consider the following 432-residue polypeptide: Adenylosuccinate synthetase (432 aa).

GTP-binding positions include 13–19 (GDEGKGK) and 41–43 (GHT). The active-site Proton acceptor is aspartate 14. Residues aspartate 14 and glycine 41 each contribute to the Mg(2+) site. Residues 14 to 17 (DEGK), 39 to 42 (NAGH), threonine 130, arginine 144, glutamine 225, threonine 240, and arginine 304 contribute to the IMP site. Histidine 42 acts as the Proton donor in catalysis. 300–306 (ATTGRSR) contributes to the substrate binding site. GTP is bound by residues arginine 306, 332-334 (KLD), and 415-417 (STG).

The protein belongs to the adenylosuccinate synthetase family. As to quaternary structure, homodimer. Mg(2+) is required as a cofactor.

It is found in the cytoplasm. The catalysed reaction is IMP + L-aspartate + GTP = N(6)-(1,2-dicarboxyethyl)-AMP + GDP + phosphate + 2 H(+). It participates in purine metabolism; AMP biosynthesis via de novo pathway; AMP from IMP: step 1/2. Plays an important role in the de novo pathway of purine nucleotide biosynthesis. Catalyzes the first committed step in the biosynthesis of AMP from IMP. The protein is Adenylosuccinate synthetase of Marinomonas sp. (strain MWYL1).